We begin with the raw amino-acid sequence, 416 residues long: Gamma-glutamyl phosphate reductase (416 aa).

Belongs to the gamma-glutamyl phosphate reductase family.

It localises to the cytoplasm. It catalyses the reaction L-glutamate 5-semialdehyde + phosphate + NADP(+) = L-glutamyl 5-phosphate + NADPH + H(+). The protein operates within amino-acid biosynthesis; L-proline biosynthesis; L-glutamate 5-semialdehyde from L-glutamate: step 2/2. Functionally, catalyzes the NADPH-dependent reduction of L-glutamate 5-phosphate into L-glutamate 5-semialdehyde and phosphate. The product spontaneously undergoes cyclization to form 1-pyrroline-5-carboxylate. This chain is Gamma-glutamyl phosphate reductase, found in Streptococcus pyogenes serotype M49 (strain NZ131).